A 122-amino-acid polypeptide reads, in one-letter code: Large ribosomal subunit protein uL14 (122 aa).

Belongs to the universal ribosomal protein uL14 family. Part of the 50S ribosomal subunit. Forms a cluster with proteins L3 and L19. In the 70S ribosome, L14 and L19 interact and together make contacts with the 16S rRNA in bridges B5 and B8.

Its function is as follows. Binds to 23S rRNA. Forms part of two intersubunit bridges in the 70S ribosome. This chain is Large ribosomal subunit protein uL14, found in Finegoldia magna (strain ATCC 29328 / DSM 20472 / WAL 2508) (Peptostreptococcus magnus).